A 378-amino-acid polypeptide reads, in one-letter code: Putative protein YbfL (378 aa).

It belongs to the transposase 11 family.

The chain is Putative protein YbfL (ybfL) from Escherichia coli (strain K12).